A 394-amino-acid chain; its full sequence is Choline/ethanolamine kinase (394 aa).

The residue at position 2 (Ala2) is an N-acetylalanine. Residues Gly22–Ser42 are disordered. Residues Ser75–Leu81, Arg104, Gln146–Pro152, Gln244, and Asp264 each bind ATP. Gly77 to Ser79 provides a ligand contact to substrate.

This sequence belongs to the choline/ethanolamine kinase family. Homodimer, and heterodimer with CHKA.

It carries out the reaction choline + ATP = phosphocholine + ADP + H(+). The enzyme catalyses ethanolamine + ATP = phosphoethanolamine + ADP + H(+). Its pathway is phospholipid metabolism; phosphatidylethanolamine biosynthesis; phosphatidylethanolamine from ethanolamine: step 1/3. In terms of biological role, has a key role in phospholipid metabolism, and catalyzes the first step of phosphatidylethanolamine and phosphatidylcholine biosynthesis. This is Choline/ethanolamine kinase (Chkb) from Rattus norvegicus (Rat).